The primary structure comprises 510 residues: Light-independent protochlorophyllide reductase subunit B (510 aa).

Aspartate 36 is a binding site for [4Fe-4S] cluster. Aspartate 296 functions as the Proton donor in the catalytic mechanism. Residue 431–432 (GM) participates in substrate binding.

This sequence belongs to the ChlB/BchB/BchZ family. In terms of assembly, protochlorophyllide reductase is composed of three subunits; ChlL, ChlN and ChlB. Forms a heterotetramer of two ChlB and two ChlN subunits. It depends on [4Fe-4S] cluster as a cofactor.

It is found in the plastid. The protein localises to the chloroplast. It catalyses the reaction chlorophyllide a + oxidized 2[4Fe-4S]-[ferredoxin] + 2 ADP + 2 phosphate = protochlorophyllide a + reduced 2[4Fe-4S]-[ferredoxin] + 2 ATP + 2 H2O. Its pathway is porphyrin-containing compound metabolism; chlorophyll biosynthesis (light-independent). Functionally, component of the dark-operative protochlorophyllide reductase (DPOR) that uses Mg-ATP and reduced ferredoxin to reduce ring D of protochlorophyllide (Pchlide) to form chlorophyllide a (Chlide). This reaction is light-independent. The NB-protein (ChlN-ChlB) is the catalytic component of the complex. The sequence is that of Light-independent protochlorophyllide reductase subunit B from Physcomitrium patens (Spreading-leaved earth moss).